The sequence spans 169 residues: Small ribosomal subunit protein uS5c (169 aa).

The region spanning Trp17–Ile80 is the S5 DRBM domain.

It belongs to the universal ribosomal protein uS5 family. In terms of assembly, part of the 30S ribosomal subunit. Contacts protein S4.

It localises to the plastid. It is found in the chloroplast. Functionally, with S4 and S12 plays an important role in translational accuracy. The polypeptide is Small ribosomal subunit protein uS5c (rps5) (Guillardia theta (Cryptophyte)).